A 435-amino-acid chain; its full sequence is Protein GOLM2 (435 aa).

At methionine 1 the chain carries N-acetylmethionine. Over 1-14 (MVGFGANRRAGRLP) the chain is Cytoplasmic. Residues 15–35 (SFVLVVLLVVIVVLAFNYWSI) traverse the membrane as a helical; Signal-anchor for type II membrane protein segment. A coiled-coil region spans residues 35–194 (ISSRHVLLQE…DQFLQEQKET (160 aa)). Topologically, residues 36–435 (SSRHVLLQEE…YGKQRFSDVL (400 aa)) are lumenal. 2 stretches are compositionally biased toward basic and acidic residues: residues 191-212 (QKET…DHGA) and 223-239 (DANK…PHGK). Disordered stretches follow at residues 191–239 (QKET…PHGK) and 271–435 (PPVL…SDVL). Serine 232 is modified (phosphoserine). Polar residues-rich tracts occupy residues 282-294 (QTIS…QPLS) and 302-320 (HLNQ…SNPL). Residues 343-361 (ATRDRANDFHKLKQSRFFD) are compositionally biased toward basic and acidic residues. Phosphoserine is present on serine 365. The span at 398-417 (YNEEEDGDGGEEDVQDDEER) shows a compositional bias: acidic residues. Residues 425 to 435 (DYGKQRFSDVL) are compositionally biased toward basic and acidic residues.

Belongs to the GOLM family.

It is found in the membrane. The chain is Protein GOLM2 from Mus musculus (Mouse).